We begin with the raw amino-acid sequence, 309 residues long: Transcriptional regulator HilD (309 aa).

The HTH araC/xylS-type domain occupies 209-306 (ERVYNIISSS…KTTPSTFIKM (98 aa)). DNA-binding regions (H-T-H motif) lie at residues 226–247 (TDVA…AEEG) and 273–296 (VNAV…KKYF).

This Salmonella typhimurium (strain SL1344) protein is Transcriptional regulator HilD (hilD).